Here is a 532-residue protein sequence, read N- to C-terminus: BEL1-like homeodomain protein 6 (532 aa).

The segment at 144–160 is SR/KY domain; it reads SKYLKAAQQLLDEAVNV. The segment at 170–203 is disordered; sequence EGDKNNENPQEPNQSTQDSSTNPPADISQSERQE. Over residues 176-197 the composition is skewed to polar residues; it reads ENPQEPNQSTQDSSTNPPADIS. The BELL domain stretch occupies residues 200–271; sequence ERQEMQSKLT…SLRDAISGQI (72 aa). A DNA-binding region (homeobox) is located at residues 314–376; it reads AWRPQRGLPE…NARVRLWKPM (63 aa). Positions 385–434 are disordered; it reads FTENDSNSSSENTPKMSEIGPVAADDEDRAREFSQDQTKPDHGHGYGEET. A compositionally biased stretch (basic and acidic residues) spans 412-434; the sequence is DRAREFSQDQTKPDHGHGYGEET.

The protein belongs to the TALE/BELL homeobox family. May form heterodimeric complexes with TALE/KNOX proteins. Interacts with OFP2, OFP4, and OFP5.

It localises to the nucleus. This Arabidopsis thaliana (Mouse-ear cress) protein is BEL1-like homeodomain protein 6 (BLH6).